Reading from the N-terminus, the 249-residue chain is Triosephosphate isomerase (249 aa).

Residue 9–11 (NWK) participates in substrate binding. The active-site Electrophile is the histidine 95. Residue glutamate 166 is the Proton acceptor of the active site. Substrate is bound by residues glycine 172, serine 211, and 232-233 (GG).

It belongs to the triosephosphate isomerase family. In terms of assembly, homodimer.

It localises to the cytoplasm. It carries out the reaction D-glyceraldehyde 3-phosphate = dihydroxyacetone phosphate. Its pathway is carbohydrate biosynthesis; gluconeogenesis. It functions in the pathway carbohydrate degradation; glycolysis; D-glyceraldehyde 3-phosphate from glycerone phosphate: step 1/1. Involved in the gluconeogenesis. Catalyzes stereospecifically the conversion of dihydroxyacetone phosphate (DHAP) to D-glyceraldehyde-3-phosphate (G3P). The chain is Triosephosphate isomerase from Legionella pneumophila (strain Lens).